A 175-amino-acid polypeptide reads, in one-letter code: ATP-dependent protease subunit HslV (175 aa).

Thr2 is a catalytic residue. Na(+) contacts are provided by Ala159, Asp162, and Thr165.

The protein belongs to the peptidase T1B family. HslV subfamily. A double ring-shaped homohexamer of HslV is capped on each side by a ring-shaped HslU homohexamer. The assembly of the HslU/HslV complex is dependent on binding of ATP.

It localises to the cytoplasm. It carries out the reaction ATP-dependent cleavage of peptide bonds with broad specificity.. Its activity is regulated as follows. Allosterically activated by HslU binding. Protease subunit of a proteasome-like degradation complex believed to be a general protein degrading machinery. The chain is ATP-dependent protease subunit HslV from Ligilactobacillus salivarius (strain UCC118) (Lactobacillus salivarius).